Reading from the N-terminus, the 455-residue chain is Guanine/hypoxanthine permease GhxQ (455 aa).

Topologically, residues 1-31 (MSGDILQTPDAPKPQGALDNYFKITARGSTV) are cytoplasmic. The chain crosses the membrane as a helical span at residues 32-55 (RQEVLAGLTTFLAMVYSVIVVPGM). At 56–65 (LGKAGFPPAA) the chain is on the periplasmic side. The chain crosses the membrane as a helical span at residues 66 to 84 (VFVATCLVAGFGSLLMGLW). The Cytoplasmic portion of the chain corresponds to 85-86 (AN). The discontinuously helical transmembrane segment at 87–103 (LPMAIGCAISLTAFTAF) threads the bilayer. Residues 104-115 (SLVLGQQISVPV) are Periplasmic-facing. The chain crosses the membrane as a helical span at residues 116–135 (ALGAVFLMGVIFTAISVTGV). At 136-147 (RTWILRNLPMGI) the chain is on the cytoplasmic side. The chain crosses the membrane as a helical span at residues 148 to 168 (AHGTGIGIGLFLLLIAANGVG). Over 169–186 (MVIKNPIEGLPVALGAFT) the chain is Periplasmic. A helical transmembrane segment spans residues 187 to 204 (SFPVMMSLLGLAVIFGLE). Residues 205–208 (KCRV) lie on the Cytoplasmic side of the membrane. A helical membrane pass occupies residues 209-228 (PGGILLVIIAISIIGLIFDP). The Periplasmic portion of the chain corresponds to 229 to 260 (AVKYHGLVAMPSLTGEDGKSLIFSLDIMGALQ). The chain crosses the membrane as a helical span at residues 261–289 (PTVLPSVLALVMTAVFDATGTIRAVAGQA). The Cytoplasmic portion of the chain corresponds to 290–302 (NLLDKDNQIINGG). A helical membrane pass occupies residues 303–318 (KALTSDSVSSIFSGLV). Residues 319–320 (GA) lie on the Periplasmic side of the membrane. The discontinuously helical transmembrane segment at 321–336 (APAAVYIESAAGTAAG) threads the bilayer. At 337–340 (GKTG) the chain is on the cytoplasmic side. Residues 341-355 (LTATVVGALFLLILF) form a helical membrane-spanning segment. Residues 356 to 366 (LSPLSFLIPGY) are Periplasmic-facing. A helical transmembrane segment spans residues 367 to 386 (ATAPALMYVGLLMLSNVSKL). The Cytoplasmic segment spans residues 387–391 (DFNDF). The discontinuously helical intramembrane region spans 392 to 427 (IDAMAGLVCAVFIVLTCNIVTGIMLGFVTLVVGRVF). The Cytoplasmic segment spans residues 428–455 (AREWQKLNIGTVIITAALVAFYAGGWAI).

The protein belongs to the nucleobase:cation symporter-2 (NCS2) (TC 2.A.40) family. Azg-like subfamily.

It is found in the cell membrane. Functionally, high-affinity transporter for guanine and hypoxanthine. In Escherichia coli (strain K12), this protein is Guanine/hypoxanthine permease GhxQ (ghxQ).